A 95-amino-acid polypeptide reads, in one-letter code: Aspartyl/glutamyl-tRNA(Asn/Gln) amidotransferase subunit C (95 aa).

It belongs to the GatC family. Heterotrimer of A, B and C subunits.

The enzyme catalyses L-glutamyl-tRNA(Gln) + L-glutamine + ATP + H2O = L-glutaminyl-tRNA(Gln) + L-glutamate + ADP + phosphate + H(+). It carries out the reaction L-aspartyl-tRNA(Asn) + L-glutamine + ATP + H2O = L-asparaginyl-tRNA(Asn) + L-glutamate + ADP + phosphate + 2 H(+). Allows the formation of correctly charged Asn-tRNA(Asn) or Gln-tRNA(Gln) through the transamidation of misacylated Asp-tRNA(Asn) or Glu-tRNA(Gln) in organisms which lack either or both of asparaginyl-tRNA or glutaminyl-tRNA synthetases. The reaction takes place in the presence of glutamine and ATP through an activated phospho-Asp-tRNA(Asn) or phospho-Glu-tRNA(Gln). The polypeptide is Aspartyl/glutamyl-tRNA(Asn/Gln) amidotransferase subunit C (Chlorobium chlorochromatii (strain CaD3)).